Reading from the N-terminus, the 375-residue chain is DNA replication and repair protein RecF (375 aa).

30 to 37 (GNNGSGKS) is an ATP binding site.

The protein belongs to the RecF family.

The protein localises to the cytoplasm. Functionally, the RecF protein is involved in DNA metabolism; it is required for DNA replication and normal SOS inducibility. RecF binds preferentially to single-stranded, linear DNA. It also seems to bind ATP. In Hahella chejuensis (strain KCTC 2396), this protein is DNA replication and repair protein RecF.